A 223-amino-acid chain; its full sequence is Translation initiation factor 6 (223 aa).

It belongs to the eIF-6 family. As to quaternary structure, associates with the 50S ribosomal subunit, specifically with protein L14. Binds to 23S rRNA, possibly between where the 30S and 50S subunits associate to initiate translation. In terms of processing, modified in an unknown fashion (not phosphorylation) following release from 50S ribosomal subunits.

Binds to the 50S ribosomal subunit and prevents its association with the 30S ribosomal subunit to form the 70S initiation complex. Inhibits translation of both leadered and leaderless mRNAs, maybe by binding to the 50S ribosome subunit, preventing it from binding to the 30S subunit. The sequence is that of Translation initiation factor 6 from Saccharolobus solfataricus (strain ATCC 35092 / DSM 1617 / JCM 11322 / P2) (Sulfolobus solfataricus).